Here is a 164-residue protein sequence, read N- to C-terminus: Large ribosomal subunit protein uL15 (164 aa).

Residues 1–33 (MTSKKRRQRGSRTHGGGTHKNRRGAGHRGGRGR) are compositionally biased toward basic residues. Disordered regions lie at residues 1-59 (MTSK…PGAE) and 137-164 (AGGS…NDEN). The span at 34–43 (AGRDKHEQHN) shows a compositional bias: basic and acidic residues. Positions 153–164 (GEDEEPNSNDEN) are enriched in acidic residues.

Belongs to the universal ribosomal protein uL15 family. In terms of assembly, part of the 50S ribosomal subunit.

In terms of biological role, binds to the 23S rRNA. The sequence is that of Large ribosomal subunit protein uL15 from Haloquadratum walsbyi (strain DSM 16790 / HBSQ001).